The sequence spans 395 residues: Acetate kinase (395 aa).

Asn8 is a binding site for Mg(2+). ATP is bound at residue Lys15. Arg89 is a substrate binding site. Asp146 serves as the catalytic Proton donor/acceptor. ATP is bound by residues His206–Gly210, Asp281–Arg283, and Gly329–Asn333. Glu382 provides a ligand contact to Mg(2+).

This sequence belongs to the acetokinase family. In terms of assembly, homodimer. Mg(2+) serves as cofactor. Requires Mn(2+) as cofactor.

It is found in the cytoplasm. It catalyses the reaction acetate + ATP = acetyl phosphate + ADP. Its pathway is metabolic intermediate biosynthesis; acetyl-CoA biosynthesis; acetyl-CoA from acetate: step 1/2. Induced by glucose excess, the induction may be mediated by CcpA transcriptional regulator. In terms of biological role, catalyzes the formation of acetyl phosphate from acetate and ATP. Can also catalyze the reverse reaction. Appears to favor the formation of acetate. Involved in the secretion of excess carbohydrate. This is Acetate kinase from Bacillus subtilis (strain 168).